The chain runs to 151 residues: Large ribosomal subunit protein bL9 (151 aa).

The protein belongs to the bacterial ribosomal protein bL9 family.

Functionally, binds to the 23S rRNA. The protein is Large ribosomal subunit protein bL9 of Rhodococcus opacus (strain B4).